Here is a 287-residue protein sequence, read N- to C-terminus: MAEITAALVKELRERTGQGMMECKKALVAAGGDIEKAIDDMRASGAIKAAKKSGNIAAEGSIAVRVEGGRGLIIEVNSQTDFLALQDDFKAFVKESLDEAFEQKLTEVAPLIASRESAREALVAKCGENVNIRRLSAVEGEVVGAYLHGHRIGVLVTLKGGDAELAKDIAMHVAASNPAVLSPADVSEELIAKEKEIFLQLNADKIAGKPENIVENMIKGRINKFLAEASLVEQPFVKDPEVKVGDLAKKAGAEIVSFVRYEVGEGIEKAEVDFAAEVAAQVAATKK.

The involved in Mg(2+) ion dislocation from EF-Tu stretch occupies residues 80 to 83 (TDFL).

It belongs to the EF-Ts family.

The protein resides in the cytoplasm. In terms of biological role, associates with the EF-Tu.GDP complex and induces the exchange of GDP to GTP. It remains bound to the aminoacyl-tRNA.EF-Tu.GTP complex up to the GTP hydrolysis stage on the ribosome. In Stutzerimonas stutzeri (strain A1501) (Pseudomonas stutzeri), this protein is Elongation factor Ts.